The following is a 45-amino-acid chain: NLR family pyrin domain-containing protein 2B (45 aa).

As to expression, expressed in all tissues tested, including spleen, lymph node, thymus, tonsil, peripheral blood leukocyte, bone marrow, liver, heart, brain, placenta, lung, skeletal muscle, kidney and pancreas.

It is found in the cytoplasm. The protein localises to the nucleus. Functionally, may function as a negative regulator of NF-kappa-B by preventing RELA/p65 phosphorylation at 'Ser-536', thereby inhibiting its transcriptional activity. Through NF-kappa-B regulation may control cytokine release upon Toll-like receptors activation and therefore play a role in modulation of innate immunity. May also play a role in cell cycle progression and apoptotic process. The sequence is that of NLR family pyrin domain-containing protein 2B from Homo sapiens (Human).